Here is a 180-residue protein sequence, read N- to C-terminus: ATP-dependent protease subunit HslV (180 aa).

Threonine 9 is a catalytic residue. Na(+)-binding residues include alanine 164, cysteine 167, and threonine 170.

Belongs to the peptidase T1B family. HslV subfamily. In terms of assembly, a double ring-shaped homohexamer of HslV is capped on each side by a ring-shaped HslU homohexamer. The assembly of the HslU/HslV complex is dependent on binding of ATP.

Its subcellular location is the cytoplasm. The catalysed reaction is ATP-dependent cleavage of peptide bonds with broad specificity.. Its activity is regulated as follows. Allosterically activated by HslU binding. Functionally, protease subunit of a proteasome-like degradation complex believed to be a general protein degrading machinery. This chain is ATP-dependent protease subunit HslV, found in Leptospira interrogans serogroup Icterohaemorrhagiae serovar Lai (strain 56601).